We begin with the raw amino-acid sequence, 343 residues long: Fanconi anemia group F protein (343 aa).

As to quaternary structure, belongs to the multisubunit FA complex composed of FANCA, FANCB, FANCC, FANCE, FANCF, FANCG, FANCL/PHF9 and FANCM. In complex with FANCA, FANCG and FANCL, but not with FANCC, nor FANCE, interacts with HES1; this interaction may be essential for the stability and nuclear localization of FA core complex proteins.

Its subcellular location is the nucleus. Its function is as follows. DNA repair protein that may operate in a postreplication repair or a cell cycle checkpoint function. May be implicated in interstrand DNA cross-link repair and in the maintenance of normal chromosome stability. The polypeptide is Fanconi anemia group F protein (Mus musculus (Mouse)).